A 122-amino-acid polypeptide reads, in one-letter code: Large ribosomal subunit protein uL14 (122 aa).

The protein belongs to the universal ribosomal protein uL14 family. In terms of assembly, part of the 50S ribosomal subunit. Forms a cluster with proteins L3 and L19. In the 70S ribosome, L14 and L19 interact and together make contacts with the 16S rRNA in bridges B5 and B8.

Binds to 23S rRNA. Forms part of two intersubunit bridges in the 70S ribosome. The polypeptide is Large ribosomal subunit protein uL14 (Coxiella burnetii (strain RSA 331 / Henzerling II)).